The chain runs to 406 residues: 8-amino-7-oxononanoate synthase (406 aa).

Arg21 contributes to the substrate binding site. A pyridoxal 5'-phosphate-binding site is contributed by 112-113 (GY). His137 serves as a coordination point for substrate. Ser183, His211, and Thr239 together coordinate pyridoxal 5'-phosphate. Lys242 bears the N6-(pyridoxal phosphate)lysine mark. Thr358 lines the substrate pocket.

The protein belongs to the class-II pyridoxal-phosphate-dependent aminotransferase family. BioF subfamily. In terms of assembly, homodimer. Requires pyridoxal 5'-phosphate as cofactor.

It catalyses the reaction 6-carboxyhexanoyl-[ACP] + L-alanine + H(+) = (8S)-8-amino-7-oxononanoate + holo-[ACP] + CO2. It functions in the pathway cofactor biosynthesis; biotin biosynthesis. Its function is as follows. Catalyzes the decarboxylative condensation of pimeloyl-[acyl-carrier protein] and L-alanine to produce 8-amino-7-oxononanoate (AON), [acyl-carrier protein], and carbon dioxide. The polypeptide is 8-amino-7-oxononanoate synthase (Burkholderia cenocepacia (strain HI2424)).